Here is a 393-residue protein sequence, read N- to C-terminus: Chalcone synthase DIII (393 aa).

Cys-164 is an active-site residue.

It belongs to the thiolase-like superfamily. Chalcone/stilbene synthases family.

It catalyses the reaction (E)-4-coumaroyl-CoA + 3 malonyl-CoA + 3 H(+) = 2',4,4',6'-tetrahydroxychalcone + 3 CO2 + 4 CoA. Its pathway is secondary metabolite biosynthesis; flavonoid biosynthesis. In terms of biological role, the primary product of this enzyme is 4,2',4',6'-tetrahydroxychalcone (also termed naringenin-chalcone or chalcone) which can under specific conditions spontaneously isomerize into naringenin. The protein is Chalcone synthase DIII (CHS-DIII) of Ipomoea batatas (Sweet potato).